The chain runs to 357 residues: Eugenol O-methyltransferase (357 aa).

S-adenosyl-L-methionine-binding residues include Gly-203, Asp-226, Asp-246, Met-247, and Lys-260. His-264 (proton acceptor) is an active-site residue.

Belongs to the class I-like SAM-binding methyltransferase superfamily. Cation-independent O-methyltransferase family. COMT subfamily. As to expression, specifically expressed in the peltate glandular trichomes on the surface of the young basil leaves.

It catalyses the reaction (E)-isoeugenol + S-adenosyl-L-methionine = (E)-isomethyleugenol + S-adenosyl-L-homocysteine + H(+). It functions in the pathway aromatic compound metabolism; phenylpropanoid biosynthesis. In terms of biological role, phenylpropene O-methyltransferase that catalyzes the methylation of the para-4-hydroxyl of eugenol to methyleugenol. Can also convert chavicol to methylchavicol but with less affinity. This Ocimum basilicum (Sweet basil) protein is Eugenol O-methyltransferase (EOMT1).